We begin with the raw amino-acid sequence, 881 residues long: Regulatory protein GAL4 (881 aa).

Residues cysteine 11, cysteine 14, cysteine 21, cysteine 28, cysteine 31, and cysteine 38 each contribute to the Zn(2+) site. Positions 11-38 form a DNA-binding region, zn(2)-C6 fungal-type; that stretch reads CDICRLKKLKCSKEKPKCAKCLKNNWEC. Phosphotyrosine is present on tyrosine 694. Phosphoserine occurs at positions 696, 699, 703, and 712. A disordered region spans residues 723 to 743; it reads RPPSRNSPVTIPRSTPSHRSV. The 9aaTAD motif lies at 862 to 870; sequence DDVYNYLFD.

Binds DNA as a homodimer. Interacts directly with the mediator subunits GAL11/MED15 and SRB4/MED17. In terms of processing, association between GAL11 and GAL4 may serve to expedite phosphorylation of GAL4.

The protein resides in the nucleus. Functionally, this protein is a positive regulator for the gene expression of the galactose-induced genes such as GAL1, GAL2, GAL7, GAL10, and MEL1 which code for the enzymes used to convert galactose to glucose. It recognizes a 17 base pair sequence in (5'-CGGRNNRCYNYNCNCCG-3') the upstream activating sequence (UAS-G) of these genes. In Saccharomyces cerevisiae (strain ATCC 204508 / S288c) (Baker's yeast), this protein is Regulatory protein GAL4 (GAL4).